The following is a 167-amino-acid chain: Troponin C-akin-1 protein (167 aa).

A substrate-binding site is contributed by 17-20; sequence YGAL. E92 acts as the Proton acceptor in catalysis.

This sequence belongs to the gamma-glutamylcyclotransferase family. In embryos, expression is seen in heart cells of the dorsal vessel and hindgut visceral mesoderm.

Putative gamma-glutamylcyclotransferase. This chain is Troponin C-akin-1 protein (Tina-1), found in Drosophila melanogaster (Fruit fly).